A 1063-amino-acid chain; its full sequence is DNA-directed RNA polymerase subunit beta (1063 aa).

The protein belongs to the RNA polymerase beta chain family. In plastids the minimal PEP RNA polymerase catalytic core is composed of four subunits: alpha, beta, beta', and beta''. When a (nuclear-encoded) sigma factor is associated with the core the holoenzyme is formed, which can initiate transcription.

It localises to the plastid. Its subcellular location is the chloroplast. It catalyses the reaction RNA(n) + a ribonucleoside 5'-triphosphate = RNA(n+1) + diphosphate. Functionally, DNA-dependent RNA polymerase catalyzes the transcription of DNA into RNA using the four ribonucleoside triphosphates as substrates. This Zygnema circumcarinatum (Green alga) protein is DNA-directed RNA polymerase subunit beta.